The primary structure comprises 304 residues: Ribonuclease Z (304 aa).

Zn(2+) is bound by residues H61, H63, D65, H66, H138, D206, and H265. The Proton acceptor role is filled by D65.

The protein belongs to the RNase Z family. As to quaternary structure, homodimer. Zn(2+) serves as cofactor.

The catalysed reaction is Endonucleolytic cleavage of RNA, removing extra 3' nucleotides from tRNA precursor, generating 3' termini of tRNAs. A 3'-hydroxy group is left at the tRNA terminus and a 5'-phosphoryl group is left at the trailer molecule.. Functionally, zinc phosphodiesterase, which displays some tRNA 3'-processing endonuclease activity. Probably involved in tRNA maturation, by removing a 3'-trailer from precursor tRNA. The sequence is that of Ribonuclease Z from Lachnoclostridium phytofermentans (strain ATCC 700394 / DSM 18823 / ISDg) (Clostridium phytofermentans).